We begin with the raw amino-acid sequence, 272 residues long: Catabolic 3-dehydroquinate dehydratase (272 aa).

3-dehydroquinate contacts are provided by residues 66–68 (EFR) and R102. H163 acts as the Proton donor/acceptor in catalysis. The active-site Schiff-base intermediate with substrate is the K190. 3 residues coordinate 3-dehydroquinate: R232, S251, and Q255.

Belongs to the type-I 3-dehydroquinase family.

It catalyses the reaction 3-dehydroquinate = 3-dehydroshikimate + H2O. Its pathway is aromatic compound metabolism; 3,4-dihydroxybenzoate biosynthesis; 3,4-dihydroxybenzoate from 3-dehydroquinate: step 1/2. Functionally, involved in the biosynthesis of protocatechuate. Catalyzes the catabolic dehydration of 3-dehydroquinate (DHQ) to yield 3-dehydroshikimate. The chain is Catabolic 3-dehydroquinate dehydratase from Acinetobacter baylyi (strain ATCC 33305 / BD413 / ADP1).